The following is a 72-amino-acid chain: Translation initiation factor IF-1 (72 aa).

The region spanning 1-72 is the S1-like domain; it reads MAKEDSIRMQ…NKGRIVYRER (72 aa).

It belongs to the IF-1 family. As to quaternary structure, component of the 30S ribosomal translation pre-initiation complex which assembles on the 30S ribosome in the order IF-2 and IF-3, IF-1 and N-formylmethionyl-tRNA(fMet); mRNA recruitment can occur at any time during PIC assembly.

It is found in the cytoplasm. In terms of biological role, one of the essential components for the initiation of protein synthesis. Stabilizes the binding of IF-2 and IF-3 on the 30S subunit to which N-formylmethionyl-tRNA(fMet) subsequently binds. Helps modulate mRNA selection, yielding the 30S pre-initiation complex (PIC). Upon addition of the 50S ribosomal subunit IF-1, IF-2 and IF-3 are released leaving the mature 70S translation initiation complex. The polypeptide is Translation initiation factor IF-1 (Halorhodospira halophila (strain DSM 244 / SL1) (Ectothiorhodospira halophila (strain DSM 244 / SL1))).